Here is a 451-residue protein sequence, read N- to C-terminus: 23S rRNA (uracil(1939)-C(5))-methyltransferase RlmD (451 aa).

The interval 1–21 is disordered; it reads MAKHERGLRFQPTGGVKSVQI. The TRAM domain maps to 20–78; sequence QIPAGKKQRLSIERLSDDGRGIAFLEGKTWFVAGSLAGEEVEARVLNARGKVVEARTER. Residues Cys91, Cys97, Cys100, and Cys179 each contribute to the [4Fe-4S] cluster site. Positions 283, 312, 317, 333, 360, and 381 each coordinate S-adenosyl-L-methionine. Cys407 (nucleophile) is an active-site residue.

The protein belongs to the class I-like SAM-binding methyltransferase superfamily. RNA M5U methyltransferase family. RlmD subfamily.

It carries out the reaction uridine(1939) in 23S rRNA + S-adenosyl-L-methionine = 5-methyluridine(1939) in 23S rRNA + S-adenosyl-L-homocysteine + H(+). Its function is as follows. Catalyzes the formation of 5-methyl-uridine at position 1939 (m5U1939) in 23S rRNA. The chain is 23S rRNA (uracil(1939)-C(5))-methyltransferase RlmD from Pseudomonas syringae pv. tomato (strain ATCC BAA-871 / DC3000).